Here is a 481-residue protein sequence, read N- to C-terminus: Ribulose bisphosphate carboxylase large chain (481 aa).

Residues 1–2 (MS) constitute a propeptide that is removed on maturation. P3 carries the post-translational modification N-acetylproline. K14 is modified (N6,N6,N6-trimethyllysine). Substrate is bound by residues N123 and T173. Catalysis depends on K175, which acts as the Proton acceptor. Residue K177 participates in substrate binding. Residues K201, D203, and E204 each contribute to the Mg(2+) site. K201 carries the N6-carboxylysine modification. Catalysis depends on H294, which acts as the Proton acceptor. Substrate contacts are provided by R295, H327, and S379.

This sequence belongs to the RuBisCO large chain family. Type I subfamily. In terms of assembly, heterohexadecamer of 8 large chains and 8 small chains; disulfide-linked. The disulfide link is formed within the large subunit homodimers. Mg(2+) is required as a cofactor. The disulfide bond which can form in the large chain dimeric partners within the hexadecamer appears to be associated with oxidative stress and protein turnover.

Its subcellular location is the plastid. It localises to the chloroplast. The catalysed reaction is 2 (2R)-3-phosphoglycerate + 2 H(+) = D-ribulose 1,5-bisphosphate + CO2 + H2O. It carries out the reaction D-ribulose 1,5-bisphosphate + O2 = 2-phosphoglycolate + (2R)-3-phosphoglycerate + 2 H(+). Its function is as follows. RuBisCO catalyzes two reactions: the carboxylation of D-ribulose 1,5-bisphosphate, the primary event in carbon dioxide fixation, as well as the oxidative fragmentation of the pentose substrate in the photorespiration process. Both reactions occur simultaneously and in competition at the same active site. The sequence is that of Ribulose bisphosphate carboxylase large chain from Coffea arabica (Arabian coffee).